Consider the following 396-residue polypeptide: Mevalonate kinase (396 aa).

ATP is bound by residues Lys13, Asn55, Ser135, and 140–146; that span reads GAGLGSS. Catalysis depends on Ser146, which acts as the Proton donor. Positions 146 and 193 each coordinate Mg(2+). Asp204 acts as the Proton acceptor in catalysis.

Belongs to the GHMP kinase family. Mevalonate kinase subfamily. In terms of assembly, homodimer. The cofactor is Mg(2+).

It localises to the cytoplasm. The protein localises to the peroxisome. The enzyme catalyses (R)-mevalonate + ATP = (R)-5-phosphomevalonate + ADP + H(+). The protein operates within isoprenoid biosynthesis; isopentenyl diphosphate biosynthesis via mevalonate pathway; isopentenyl diphosphate from (R)-mevalonate: step 1/3. Farnesyl pyrophosphate and geranyl pyrophosphate inhibit mevalonate kinase activity by binding competitively at the ATP-binding sites. Its function is as follows. Catalyzes the phosphorylation of mevalonate to mevalonate 5-phosphate, a key step in isoprenoid and cholesterol biosynthesis. In Bos taurus (Bovine), this protein is Mevalonate kinase.